Reading from the N-terminus, the 196-residue chain is Molybdenum cofactor guanylyltransferase (196 aa).

Residues 10–12, Lys23, Asn51, Asp69, and Asp99 contribute to the GTP site; that span reads LAG. Asp99 contacts Mg(2+).

It belongs to the MobA family. In terms of assembly, monomer. Requires Mg(2+) as cofactor.

It is found in the cytoplasm. The catalysed reaction is Mo-molybdopterin + GTP + H(+) = Mo-molybdopterin guanine dinucleotide + diphosphate. In terms of biological role, transfers a GMP moiety from GTP to Mo-molybdopterin (Mo-MPT) cofactor (Moco or molybdenum cofactor) to form Mo-molybdopterin guanine dinucleotide (Mo-MGD) cofactor. This Shewanella baltica (strain OS185) protein is Molybdenum cofactor guanylyltransferase.